The sequence spans 417 residues: Probable tubulin polyglutamylase ttll-9 (417 aa).

One can recognise a TTL domain in the interval 23–372 (QRKKKILFKC…EKKLIGNENE (350 aa)). ATP-binding positions include 188–191 (QCYV), lysine 201, and aspartate 203.

This sequence belongs to the tubulin--tyrosine ligase family. As to expression, expressed in head sensory neurons.

Polyglutamylase that forms polyglutamate side chains on tubulin. Acts when complexed with other proteins. Appears to be dispensable for polar spindle formation in dividing embryonic cells, for cilia-dependent osmotic avoidance and for male mating behavior. Probably by regulating microtubule stability via the glutamylation of tubulin, regulates PLM axon developmental growth. The sequence is that of Probable tubulin polyglutamylase ttll-9 from Caenorhabditis elegans.